The sequence spans 358 residues: tRNA (guanine-N(7)-)-methyltransferase (358 aa).

The segment at M1 to D29 is disordered. Residues G99 and E122–I123 contribute to the S-adenosyl-L-methionine site. Low complexity predominate over residues T151 to T186. Residues T151 to T194 form a disordered region. Residues N209 to T210 and C229 each bind S-adenosyl-L-methionine. D232 is a catalytic residue. Residue T330–E332 participates in S-adenosyl-L-methionine binding.

It belongs to the class I-like SAM-binding methyltransferase superfamily. TrmB family. As to quaternary structure, forms a complex with trm82.

Its subcellular location is the nucleus. The enzyme catalyses guanosine(46) in tRNA + S-adenosyl-L-methionine = N(7)-methylguanosine(46) in tRNA + S-adenosyl-L-homocysteine. It functions in the pathway tRNA modification; N(7)-methylguanine-tRNA biosynthesis. In terms of biological role, catalyzes the formation of N(7)-methylguanine at position 46 (m7G46) in tRNA. This Aspergillus fumigatus (strain ATCC MYA-4609 / CBS 101355 / FGSC A1100 / Af293) (Neosartorya fumigata) protein is tRNA (guanine-N(7)-)-methyltransferase (trm8).